The chain runs to 432 residues: 3-chlorobenzoate-3,4-dioxygenase oxygenase subunit (432 aa).

A Rieske domain is found at 27–133 (WIPALKSTEL…VKEMAGVVWV (107 aa)). Residues Cys69, His71, Cys88, and His91 each contribute to the [2Fe-2S] cluster site. The Fe cation site is built by His180 and His185.

The protein belongs to the bacterial ring-hydroxylating dioxygenase alpha subunit family. This dioxygenase system consists of two proteins: an oxygenase and an oxygenase reductase. Requires [2Fe-2S] cluster as cofactor. Fe cation is required as a cofactor.

The polypeptide is 3-chlorobenzoate-3,4-dioxygenase oxygenase subunit (cbaA) (Comamonas testosteroni (Pseudomonas testosteroni)).